Reading from the N-terminus, the 354-residue chain is S-adenosylmethionine:tRNA ribosyltransferase-isomerase (354 aa).

Belongs to the QueA family. As to quaternary structure, monomer.

Its subcellular location is the cytoplasm. It carries out the reaction 7-aminomethyl-7-carbaguanosine(34) in tRNA + S-adenosyl-L-methionine = epoxyqueuosine(34) in tRNA + adenine + L-methionine + 2 H(+). The protein operates within tRNA modification; tRNA-queuosine biosynthesis. Functionally, transfers and isomerizes the ribose moiety from AdoMet to the 7-aminomethyl group of 7-deazaguanine (preQ1-tRNA) to give epoxyqueuosine (oQ-tRNA). The chain is S-adenosylmethionine:tRNA ribosyltransferase-isomerase from Azorhizobium caulinodans (strain ATCC 43989 / DSM 5975 / JCM 20966 / LMG 6465 / NBRC 14845 / NCIMB 13405 / ORS 571).